A 342-amino-acid polypeptide reads, in one-letter code: N-acetyl-gamma-glutamyl-phosphate reductase (342 aa).

Cys146 is a catalytic residue.

The protein belongs to the NAGSA dehydrogenase family. Type 1 subfamily.

The protein resides in the cytoplasm. It catalyses the reaction N-acetyl-L-glutamate 5-semialdehyde + phosphate + NADP(+) = N-acetyl-L-glutamyl 5-phosphate + NADPH + H(+). Its pathway is amino-acid biosynthesis; L-arginine biosynthesis; N(2)-acetyl-L-ornithine from L-glutamate: step 3/4. In terms of biological role, catalyzes the NADPH-dependent reduction of N-acetyl-5-glutamyl phosphate to yield N-acetyl-L-glutamate 5-semialdehyde. This Frankia casuarinae (strain DSM 45818 / CECT 9043 / HFP020203 / CcI3) protein is N-acetyl-gamma-glutamyl-phosphate reductase.